We begin with the raw amino-acid sequence, 538 residues long: Sterol esterase 2 (538 aa).

The Cytoplasmic portion of the chain corresponds to 1–11 (MVNKVVDEVQR). The chain crosses the membrane as a helical; Signal-anchor for type II membrane protein span at residues 12–32 (LVSAIILTSFMTGLFILSLWK). Residues 33–538 (NYVTVHFQHK…IENLRFPNAR (506 aa)) are Lumenal-facing. The disordered stretch occupies residues 42–87 (KNDPRDTRSSRTKIQPNDKKKKRPARHSRPLSISSTTPLDLQRDQE). Basic residues predominate over residues 60 to 70 (KKKKRPARHSR). Phosphoserine is present on residues serine 73 and serine 107. Serine 287 serves as the catalytic Nucleophile. Active-site charge relay system residues include aspartate 480 and histidine 511.

It belongs to the AB hydrolase superfamily. Not glycosylated.

It is found in the cell membrane. The enzyme catalyses a sterol ester + H2O = a sterol + a fatty acid + H(+). Functionally, mediates the hydrolysis of steryl esters. Required for mobilization of steryl ester, thereby playing a central role in lipid metabolism. The protein is Sterol esterase 2 (YEH2) of Saccharomyces cerevisiae (strain ATCC 204508 / S288c) (Baker's yeast).